The primary structure comprises 4743 residues: Apolipoprotein B-100 (4743 aa).

The first 27 residues, 1–27, serve as a signal peptide directing secretion; the sequence is MGPQRPALRAPLLLLFLLLFLDTSVWA. The tract at residues 29-113 is heparin-binding; that stretch reads DATRFKHLRK…KNSEEFASAM (85 aa). Residues 33–660 form the Vitellogenin domain; sequence FKHLRKYVYS…PSSYLPKESM (628 aa). Residues Cys-65 and Cys-84 are joined by a disulfide bond. N-linked (GlcNAc...) asparagine glycosylation occurs at Asn-172. Cystine bridges form between Cys-173-Cys-199, Cys-232-Cys-248, Cys-372-Cys-377, and Cys-466-Cys-501. The interval 219 to 293 is heparin-binding; the sequence is VRPLSTLISS…RFFRGGINQV (75 aa). Residues 890-947 form a heparin-binding region; sequence NTNFFHESGLEARVALKAGQLKVIIPSPKRPVKLFSGSNTLHLVSTTKTEVIPPLIEN. Cys-954 and Cys-964 are joined by a disulfide. Asn-971, Asn-1336, Asn-1345, and Asn-1491 each carry an N-linked (GlcNAc...) asparagine glycan. Lys-1973 is subject to N6-acetyllysine. Ser-2006 carries the phosphoserine modification. A heparin-binding region spans residues 2010–2145; it reads NDAFDEPREF…EKLSQLETYA (136 aa). 8 N-linked (GlcNAc...) asparagine glycosylation sites follow: Asn-2094, Asn-2522, Asn-2662, Asn-2741, Asn-2791, Asn-2897, Asn-2944, and Asn-3063. The interval 3123 to 3198 is heparin-binding; sequence FLKTTKQSFD…KIKFDKYKTE (76 aa). The segment at 3136–3146 is basic (possible receptor binding region); sequence KAQYKKNRDKH. N-linked (GlcNAc...) asparagine glycosylation is found at Asn-3186, Asn-3299, and Asn-3321. Residues 3336-3356 form an LDL receptor binding region; it reads VTDALQYKLEGTSRLMRKKVL. Residues 3346–3479 form a heparin-binding region; that stretch reads GTSRLMRKKV…QEYSGSVANE (134 aa). The interval 3349 to 3357 is basic (possible receptor binding region); that stretch reads RLMRKKVLK. Asn-3428, Asn-3715, and Asn-3828 each carry an N-linked (GlcNAc...) asparagine glycan. Phosphoserine is present on Ser-3981. A Phosphothreonine modification is found at Thr-3985. 2 N-linked (GlcNAc...) asparagine glycosylation sites follow: Asn-4203 and Asn-4232.

As to quaternary structure, interacts with PCSK9. Interacts with MTTP. Interacts with AUP1. Interacts with CIDEB. In terms of processing, palmitoylated; structural requirement for proper assembly of the hydrophobic core of the lipoprotein particle. In terms of tissue distribution, detected in intestine and liver (at protein level).

Its subcellular location is the cytoplasm. It is found in the secreted. The protein localises to the lipid droplet. Functionally, apolipoprotein B is a major protein constituent of chylomicrons (apo B-48), LDL (apo B-100) and VLDL (apo B-100). Apo B-100 functions as a recognition signal for the cellular binding and internalization of LDL particles by the apoB/E receptor. This is Apolipoprotein B-100 (Apob) from Rattus norvegicus (Rat).